We begin with the raw amino-acid sequence, 286 residues long: Dioxygenase trt7 (286 aa).

Fe cation-binding residues include His-129, Asp-131, and His-206.

Belongs to the PhyH family. As to quaternary structure, homodimer. It depends on Fe cation as a cofactor.

It functions in the pathway secondary metabolite biosynthesis; terpenoid biosynthesis. Its function is as follows. Dioxygenase; part of the gene cluster that mediates the biosynthesis of terretonin, a fungal meroterpenoid that acts as a mycotoxin. The first step of the pathway is the synthesis of 3,5-dimethylorsellinic acid (DMOA) by the polyketide synthase trt4. DMOA is then prenylated into farnesyl-DMOA by the polyprenyl transferase trt2. Methylation by the methyltransferase trt5 then leads to farnesyl-DMOA methyl ester which is further subject to epoxidation by the FAD-dependent monooxygenase trt8 to yield epoxyfarnesyl-DMOA methyl ester. Cyclization of epoxyfarnesyl-DMOA methyl ester by the terpene cyclase trt1 leads to a tetracycle intermediate which is in turn converted to preterretonin. Dehydrogenase trt9 comes next to transform preterretonin to preterrenoid. The FAD-dependent monooxygenase trt3 is then required for the C-hydroxylation at C16 of preterrenoid to yield terrenoid. The cytochrome P450 trt6 catalyzes three successive oxidations to transform terrenoid into an unstable intermediate, which then undergoes the D-ring expansion and unusual rearrangement of the methoxy group to afford the core skeleton of terretonin. Trt14 catalyzes the D-ring expansion of terretonin involving intramolecular methoxy rearrangement as well as the hydrolysis of the expanded D-ring and the methyl ester moiety. Finally, the nonheme iron-dependent dioxygenase trt7 accomplishes the last two oxidation reactions steps to complete the biosynthesis of terretonin. Terretonin C is produced via spontaneous decarboxylation of the terretonin precursor. Another shunt product of the terretonin biosynthesis is dihydrofarnesyl-DMOA, derived from epoxyfarnesyl-DMOA through hydrolysis of the epoxide. The protein is Dioxygenase trt7 of Aspergillus terreus (strain NIH 2624 / FGSC A1156).